A 217-amino-acid chain; its full sequence is Putative thymidylate synthase (217 aa).

Cysteine 139 is an active-site residue.

This sequence belongs to the thymidylate synthase family. Archaeal-type ThyA subfamily. In terms of assembly, monomer.

It is found in the cytoplasm. The protein operates within pyrimidine metabolism; dTTP biosynthesis. Functionally, may catalyze the biosynthesis of dTMP using an unknown cosubstrate. In Methanosarcina mazei (strain ATCC BAA-159 / DSM 3647 / Goe1 / Go1 / JCM 11833 / OCM 88) (Methanosarcina frisia), this protein is Putative thymidylate synthase.